The following is a 110-amino-acid chain: Phosphoribosyl-ATP pyrophosphatase (110 aa).

The protein belongs to the PRA-PH family.

Its subcellular location is the cytoplasm. It carries out the reaction 1-(5-phospho-beta-D-ribosyl)-ATP + H2O = 1-(5-phospho-beta-D-ribosyl)-5'-AMP + diphosphate + H(+). It functions in the pathway amino-acid biosynthesis; L-histidine biosynthesis; L-histidine from 5-phospho-alpha-D-ribose 1-diphosphate: step 2/9. This Pseudomonas fluorescens (strain SBW25) protein is Phosphoribosyl-ATP pyrophosphatase.